A 239-amino-acid chain; its full sequence is Phosphoribosylaminoimidazole-succinocarboxamide synthase (239 aa).

It belongs to the SAICAR synthetase family.

The enzyme catalyses 5-amino-1-(5-phospho-D-ribosyl)imidazole-4-carboxylate + L-aspartate + ATP = (2S)-2-[5-amino-1-(5-phospho-beta-D-ribosyl)imidazole-4-carboxamido]succinate + ADP + phosphate + 2 H(+). It participates in purine metabolism; IMP biosynthesis via de novo pathway; 5-amino-1-(5-phospho-D-ribosyl)imidazole-4-carboxamide from 5-amino-1-(5-phospho-D-ribosyl)imidazole-4-carboxylate: step 1/2. The chain is Phosphoribosylaminoimidazole-succinocarboxamide synthase from Campylobacter hominis (strain ATCC BAA-381 / DSM 21671 / CCUG 45161 / LMG 19568 / NCTC 13146 / CH001A).